Consider the following 1077-residue polypeptide: MSVYYIVLAGFLLFMALVPFNAGQQYIDDDIEVVSSCQNGYVQNAGCDQNSQVNIIITATLDGVVTALDGETGEMIWRYEDAPLLRGTLSTSDPIDIGGTSLQLMPTLDGRLFSYTHNTNLIEPLPITTDSLLESTIRLGQDAVAGGKSVTTKGFDLFTGEQKYECSMESCGPGDTETPKNPIILIRRTTNSIRAMDTLRGIERWNLSTAEIGVTLAGGITSPTLVSDVKILLQPPDGVIVAVDKYNREEWKTNVDGHIVSVWQVYGNQIGEISIFDPSNIFTTQYEVMQREQHNLQTQSSLLYMGTSNGFPFIIQSPKAKNNLKQRMNALPELSTMTELTNPRFCTANEETRSLAYNVKDETLRLVLHNAFRHSQSKAIEDKSLSGSSARRKLQIIASDTEVSAQRIGTENLRSTSVSKSGDYGYLVLESEPQRVKFKVNSPITLMQTIFSYIFNPTAVVSFLAGLIGVTVAVVYNKIAKSSPRMIEHLSSTESAETESASHRTRTTSFAPTDDEIERFVEEGSDLSTTPIGAIHRKPLMPIEKSNIETHTQPQIKPVQRLVKTDIDTDEDSFSNDEKKRLLRNRTISRSSLEGFTSRFANEFEVKKVIGHGGFGVVFRAQSITDMNEYAVKRIAVADNDKARNRVLREARALAMFDHPGIIRYFYAWEERPPKGFQEKEDENLLGKIKAEKLAKLHEIKKAKKHTSEGKRVRSADTASFAESFAMPPVVGNTTDAENSWSTSAKPQEVGAKRTTSESKLGLHGGSDRTTAELKEESVAFSESDEESDTTEDSSSSDESPSSSSGSSIDDEPKKYNSSSGGIEFVDGSDDVDNEAVKETKKEIAVIEELSIHNRAMIVETENQELEVRERNDTGDCAYLYIVMQLCAEKTLEDWIRRSKTMESRPLFTMKNWIKQLASGLEYLHNKGFIHRDLKPGNVFFSLDSTHGHQILKIGDLGLATKTDGAPKITVRQDSDSSAKHTKNVGTRSYMSPEQLKHQQYTEKVDIFALGLVATELIISFSTASERIHTFADFQKGDIPAILDNVPESRDFLLQLTSLEPSERPTAHEVATHKFLQ.

An N-terminal signal peptide occupies residues 1 to 23 (MSVYYIVLAGFLLFMALVPFNAG). At 24–453 (QQYIDDDIEV…ITLMQTIFSY (430 aa)) the chain is on the lumenal side. Asparagine 206 carries N-linked (GlcNAc...) asparagine glycosylation. The helical transmembrane segment at 454–474 (IFNPTAVVSFLAGLIGVTVAV) threads the bilayer. The Cytoplasmic portion of the chain corresponds to 475-1077 (VYNKIAKSSP…HEVATHKFLQ (603 aa)). The Protein kinase domain maps to 604–1076 (FEVKKVIGHG…AHEVATHKFL (473 aa)). ATP is bound by residues 610 to 618 (IGHGGFGVV) and lysine 633. The disordered stretch occupies residues 727–834 (MPPVVGNTTD…FVDGSDDVDN (108 aa)). Polar residues predominate over residues 732 to 746 (GNTTDAENSWSTSAK). A compositionally biased stretch (basic and acidic residues) spans 766-778 (GSDRTTAELKEES). Over residues 783–796 (ESDEESDTTEDSSS) the composition is skewed to acidic residues. Residues 797–808 (SDESPSSSSGSS) show a composition bias toward low complexity. Residue aspartate 933 is the Proton acceptor of the active site.

The protein belongs to the protein kinase superfamily. Ser/Thr protein kinase family. GCN2 subfamily. As to quaternary structure, forms dimers with HSPA5/BIP in resting cells. Oligomerizes in ER-stressed cells. Autophosphorylated. In terms of processing, N-glycosylated. Expressed in intestinal cells.

The protein localises to the endoplasmic reticulum membrane. It carries out the reaction L-seryl-[protein] + ATP = O-phospho-L-seryl-[protein] + ADP + H(+). The enzyme catalyses L-threonyl-[protein] + ATP = O-phospho-L-threonyl-[protein] + ADP + H(+). Its activity is regulated as follows. Perturbation in protein folding in the endoplasmic reticulum (ER) promotes reversible dissociation from HSPA5/BIP and oligomerization, resulting in transautophosphorylation and kinase activity induction. Its function is as follows. Phosphorylates the alpha subunit of eukaryotic translation-initiation factor 2 (eIF2alpha), leading to its inactivation and thus to a rapid reduction of translational initiation and repression of global protein synthesis. May phosphorylate eIF2alpha during hypoxia. Proposed to have a role in alleviating endoplasmic reticulum stress. This Caenorhabditis elegans protein is Eukaryotic translation initiation factor 2-alpha kinase pek-1 (pek-1).